The following is a 243-amino-acid chain: 1-(5-phosphoribosyl)-5-[(5-phosphoribosylamino)methylideneamino] imidazole-4-carboxamide isomerase (243 aa).

D9 (proton acceptor) is an active-site residue. D131 acts as the Proton donor in catalysis.

It belongs to the HisA/HisF family.

It is found in the cytoplasm. The enzyme catalyses 1-(5-phospho-beta-D-ribosyl)-5-[(5-phospho-beta-D-ribosylamino)methylideneamino]imidazole-4-carboxamide = 5-[(5-phospho-1-deoxy-D-ribulos-1-ylimino)methylamino]-1-(5-phospho-beta-D-ribosyl)imidazole-4-carboxamide. It functions in the pathway amino-acid biosynthesis; L-histidine biosynthesis; L-histidine from 5-phospho-alpha-D-ribose 1-diphosphate: step 4/9. In Campylobacter jejuni (strain RM1221), this protein is 1-(5-phosphoribosyl)-5-[(5-phosphoribosylamino)methylideneamino] imidazole-4-carboxamide isomerase.